The chain runs to 45 residues: METIYLLAKLPEAYQIFDPLVDVLPVIPLFFLALAFVWQAAVGFK.

A propeptide spanning residues 1–8 (METIYLLA) is cleaved from the precursor. Residues 16–40 (IFDPLVDVLPVIPLFFLALAFVWQA) traverse the membrane as a helical segment.

This sequence belongs to the PsbK family. In terms of assembly, PSII is composed of 1 copy each of membrane proteins PsbA, PsbB, PsbC, PsbD, PsbE, PsbF, PsbH, PsbI, PsbJ, PsbK, PsbL, PsbM, PsbT, PsbX, PsbY, PsbZ, Psb30/Ycf12, peripheral proteins PsbO, CyanoQ (PsbQ), PsbU, PsbV and a large number of cofactors. It forms dimeric complexes.

Its subcellular location is the cellular thylakoid membrane. Its function is as follows. One of the components of the core complex of photosystem II (PSII). PSII is a light-driven water:plastoquinone oxidoreductase that uses light energy to abstract electrons from H(2)O, generating O(2) and a proton gradient subsequently used for ATP formation. It consists of a core antenna complex that captures photons, and an electron transfer chain that converts photonic excitation into a charge separation. The sequence is that of Photosystem II reaction center protein K from Synechocystis sp. (strain ATCC 27184 / PCC 6803 / Kazusa).